A 426-amino-acid chain; its full sequence is Histidinol dehydrogenase (426 aa).

Residues Tyr130, Gln187, and Asn210 each contribute to the NAD(+) site. The substrate site is built by Ser233, Gln255, and His258. The Zn(2+) site is built by Gln255 and His258. Catalysis depends on proton acceptor residues Glu323 and His324. Residues His324, Asp357, Glu411, and His416 each coordinate substrate. Residue Asp357 participates in Zn(2+) binding. His416 is a binding site for Zn(2+).

It belongs to the histidinol dehydrogenase family. Requires Zn(2+) as cofactor.

It carries out the reaction L-histidinol + 2 NAD(+) + H2O = L-histidine + 2 NADH + 3 H(+). The protein operates within amino-acid biosynthesis; L-histidine biosynthesis; L-histidine from 5-phospho-alpha-D-ribose 1-diphosphate: step 9/9. Functionally, catalyzes the sequential NAD-dependent oxidations of L-histidinol to L-histidinaldehyde and then to L-histidine. The chain is Histidinol dehydrogenase (hisD) from Aquifex aeolicus (strain VF5).